A 428-amino-acid chain; its full sequence is Dihydroorotase (428 aa).

Zn(2+) contacts are provided by His59 and His61. Substrate-binding positions include 61–63 and Asn93; that span reads HLR. Asp151, His178, and His231 together coordinate Zn(2+). Asn277 contributes to the substrate binding site. Zn(2+) is bound at residue Asp304. Asp304 is a catalytic residue. Substrate is bound by residues His308 and 322 to 323; that span reads FG.

It belongs to the metallo-dependent hydrolases superfamily. DHOase family. Class I DHOase subfamily. It depends on Zn(2+) as a cofactor.

It carries out the reaction (S)-dihydroorotate + H2O = N-carbamoyl-L-aspartate + H(+). It participates in pyrimidine metabolism; UMP biosynthesis via de novo pathway; (S)-dihydroorotate from bicarbonate: step 3/3. Catalyzes the reversible cyclization of carbamoyl aspartate to dihydroorotate. In Bacillus cytotoxicus (strain DSM 22905 / CIP 110041 / 391-98 / NVH 391-98), this protein is Dihydroorotase.